We begin with the raw amino-acid sequence, 158 residues long: NAD(P)H-quinone oxidoreductase subunit J, chloroplastic (158 aa).

This sequence belongs to the complex I 30 kDa subunit family. As to quaternary structure, NDH is composed of at least 16 different subunits, 5 of which are encoded in the nucleus.

Its subcellular location is the plastid. It is found in the chloroplast thylakoid membrane. It catalyses the reaction a plastoquinone + NADH + (n+1) H(+)(in) = a plastoquinol + NAD(+) + n H(+)(out). The enzyme catalyses a plastoquinone + NADPH + (n+1) H(+)(in) = a plastoquinol + NADP(+) + n H(+)(out). In terms of biological role, NDH shuttles electrons from NAD(P)H:plastoquinone, via FMN and iron-sulfur (Fe-S) centers, to quinones in the photosynthetic chain and possibly in a chloroplast respiratory chain. The immediate electron acceptor for the enzyme in this species is believed to be plastoquinone. Couples the redox reaction to proton translocation, and thus conserves the redox energy in a proton gradient. The sequence is that of NAD(P)H-quinone oxidoreductase subunit J, chloroplastic from Capsella bursa-pastoris (Shepherd's purse).